The chain runs to 744 residues: Prestin (744 aa).

Residues 1 to 79 (MDHAEENEIP…WLPAYKFKEY (79 aa)) lie on the Cytoplasmic side of the membrane. A helical membrane pass occupies residues 80–105 (VLGDLVSGISTGVLQLPQGLAFAMLA). Residues 106-109 (AVPP) lie on the Extracellular side of the membrane. A helical membrane pass occupies residues 110 to 125 (VFGLYSSFYPVIMYCF). At 126 to 137 (FGTSRHISIGPF) the chain is on the cytoplasmic side. The chain crosses the membrane as a helical span at residues 138 to 147 (AVISLMIGGV). Over 148 to 178 (AVRLVPDDIVIPGGVNATNGTEARDALRVKV) the chain is Extracellular. An Involved in motor function motif is present at residues 158 to 168 (IPGGVNATNGT). Residues Asn-163 and Asn-166 are each glycosylated (N-linked (GlcNAc...) asparagine). A helical transmembrane segment spans residues 179 to 196 (AMSVTLLSGIIQFCLGVC). Residues 197–208 (RFGFVAIYLTEP) lie on the Cytoplasmic side of the membrane. The chain crosses the membrane as a helical span at residues 209–230 (LVRGFTTAAAVHVFTSMLKYLF). At 231–243 (GVKTKRYSGIFSV) the chain is on the extracellular side. An intramembrane region (helical) is located at residues 244-252 (VYSTVAVLQ). The Extracellular portion of the chain corresponds to 253–258 (NVKNLN). Residues 259–282 (VCSLGVGLMVFGLLLGGKEFNERF) traverse the membrane as a helical segment. Over 283–291 (KEKLPAPIP) the chain is Cytoplasmic. A helical transmembrane segment spans residues 292–304 (LEFFAVVMGTGIS). The Extracellular segment spans residues 305-337 (AGFNLHESYSVDVVGTLPLGLLPPANPDTSLFH). A helical membrane pass occupies residues 338 to 361 (LVYVDAIAIAIVGFSVTISMAKTL). Topologically, residues 362-370 (ANKHGYQVD) are cytoplasmic. Residues 371–388 (GNQELIALGICNSIGSLF) traverse the membrane as a helical segment. The Extracellular segment spans residues 389 to 396 (QTFSISCS). The helical transmembrane segment at 397–406 (LSRSLVQEGT) threads the bilayer. Ser-398 contacts salicylate. Residues 407–410 (GGKT) lie on the Cytoplasmic side of the membrane. A helical transmembrane segment spans residues 411 to 429 (QLAGCLASLMILLVILATG). At 430 to 436 (FLFESLP) the chain is on the extracellular side. Residues 437-455 (QAVLSAIVIVNLKGMFMQF) form a helical membrane-spanning segment. Over 456–469 (SDLPFFWRTSKIEL) the chain is Cytoplasmic. A helical membrane pass occupies residues 470-484 (TIWLTTFVSSLFLGL). A topological domain (extracellular) is located at residue Asp-485. A helical membrane pass occupies residues 486-497 (YGLITAVIIALL). Topologically, residues 498 to 744 (TVIYRTQSPS…PNATPTTPEA (247 aa)) are cytoplasmic. Positions 505–718 (SPSYKVLGQL…AVLGSHVREA (214 aa)) are extended region for STAS domain. Residues 525–713 (AYEEVKEIPG…HSIHDAVLGS (189 aa)) enclose the STAS domain. The interval 717-744 (EAMAEQEASAPPPQDDMEPNATPTTPEA) is disordered.

It belongs to the SLC26A/SulP transporter (TC 2.A.53) family. Homodimer. Interacts (via STAS domain) with CALM; this interaction is calcium-dependent and the STAS domain interacts with only one lobe of CALM which is an elongated conformation. Interacts with MYH1. Highly expressed in mature outer hair cells, but not in inner hair cells or other cells of the basilar membrane and the organ of Corti.

It localises to the lateral cell membrane. It catalyses the reaction 2 hydrogencarbonate(in) + chloride(out) = 2 hydrogencarbonate(out) + chloride(in). In terms of biological role, voltage-sensitive motor protein that drives outer hair cell (OHC) electromotility (eM) and participates in sound amplification in the hearing organ. Converts changes in the transmembrane electric potential into mechanical displacements resulting in the coupling of its expansion to movement of a charged voltage sensor across the lipid membrane. The nature of the voltage sensor is not completely clear, and two models compete. In the first model, acts as an incomplete transporter where intracellular chloride anion acts as extrinsic voltage sensor that drives conformational change in the protein which is sufficient to produce a length change in the plane of the membrane and hence in the length of the OHC. The second model in which multiple charged amino acid residues are distributed at the intracellular and extracellular membrane interfaces that form an intrinsic voltage sensor, whose movement produces the non-linear capacitance (NLC). However, the effective voltage sensor may be the result of a hybrid voltage sensor assembled from intrinsic charge (charged residues) and extrinsic charge (bound anion). Notably, binding of anions to the anion-binding pocket partially neutralizes the intrinsic positive charge rather than to form an electrically negative sensor, therefore remaining charge may serve as voltage sensor that, after depolarization, moves from down (expanded state) to up (contracted) conformation, which is accompanied by an eccentric contraction of the intermembrane cross-sectional area of the protein as well as a major increase in the hydrophobic thickness of the protein having as consequences the plasma membrane thickening and the cell contraction after membrane depolarization. The anion-binding pocket transits from the inward-open (Down) state, where it is exposed toward the intracellular solvent in the absence of anion, to the occluded (Up) state upon anion binding. Salicylate competes for the anion-binding site and inhibits the voltage-sensor movement, and therefore inhibits the charge transfer and electromotility by displacing Cl(-) from the anion-binding site and by preventing the structural transitions to the contracted state. In addition, can act as a weak Cl(-)/HCO3 (-) antiporter across the cell membrane and so regulate the intracellular pH of the outer hair cells (OHCs), while firstly found as being unable to mediate electrogenic anion transport. Moreover, supports a role in cardiac mechanical amplification serving as an elastic element to enhance the actomyosin- based sarcomere contraction system. This Meriones unguiculatus (Mongolian jird) protein is Prestin.